Here is a 747-residue protein sequence, read N- to C-terminus: Threonine synthase-like 1 (747 aa).

Lys351 carries the post-translational modification N6-(pyridoxal phosphate)lysine.

Belongs to the threonine synthase family. It depends on pyridoxal 5'-phosphate as a cofactor.

The protein is Threonine synthase-like 1 (Thnsl1) of Mus musculus (Mouse).